Reading from the N-terminus, the 404-residue chain is Sorting nexin-5 (404 aa).

The residue at position 2 (A2) is an N-acetylalanine. The 148-residue stretch at 25 to 172 folds into the PX domain; that stretch reads LNVDPSLQID…HVFLEYDQDL (148 aa). A 1,2-diacyl-sn-glycero-3-phospho-(1D-myo-inositol-4,5-bisphosphate) is bound by residues 40–46, 99–105, and 113–116; these read SERDKVK, FDGPREK, and EGSM. An interaction with DOCK1 region spans residues 169–261; sequence DQDLSVRRKN…HSLALEEPTV (93 aa). The segment at 183 to 200 is membrane-binding amphipathic helix; the sequence is FGGFFKSVVKSADEVLFT. A Phosphoserine modification is found at S193. The BAR domain maps to 202-404; it reads VKEVDDFFEQ…QSCIDLFKNN (203 aa). N6-acetyllysine is present on K275.

It belongs to the sorting nexin family. As to quaternary structure, forms heterodimers with BAR domain-containing sorting nexins SNX1 and SNX2; does not homodimerize. The heterodimers are proposed to self-assemble into helical arrays on the membrane to stabilize and expand local membrane curvature underlying endosomal tubule formation. Thought to be a component of the originally described retromer complex (also called SNX-BAR retromer) which is a pentamer containing the heterotrimeric retromer cargo-selective complex (CSC), also described as vacuolar protein sorting subcomplex (VPS), and a heterodimeric membrane-deforming subcomplex formed between SNX1 or SNX2 and SNX5 or SNX6 (also called SNX-BAR subcomplex); the respective CSC and SNX-BAR subcomplexes associate with low affinity. Interacts with SNX1, SNX2, VPS26A, VPS29, VPS35, DCTN1, DOCK1, MIB1, PIP5K1C isoform 3. Interacts with HGS; increased by PIP5K1C isoform 3 kinase activity and by PtdIns(3P) and/or PtdIns(3,4)P2. In terms of assembly, (Microbial infection) Interacts with human cytomegalovirus proteins UL35 and UL35A; these interactions inhibit the ability of USP7 to form nuclear bodies.

It localises to the endosome. It is found in the early endosome. The protein localises to the early endosome membrane. The protein resides in the cell membrane. Its subcellular location is the cytoplasmic vesicle membrane. It localises to the cytoplasm. It is found in the cell projection. The protein localises to the phagocytic cup. The protein resides in the ruffle. Involved in several stages of intracellular trafficking. Interacts with membranes containing phosphatidylinositol 3-phosphate (PtdIns(3P)) or phosphatidylinositol 3,4-bisphosphate (PtdIns(3,4)P2). Acts in part as component of the retromer membrane-deforming SNX-BAR subcomplex. The SNX-BAR retromer mediates retrograde transport of cargo proteins from endosomes to the trans-Golgi network (TGN) and is involved in endosome-to-plasma membrane transport for cargo protein recycling. The SNX-BAR subcomplex functions to deform the donor membrane into a tubular profile called endosome-to-TGN transport carrier (ETC). Does not have in vitro vesicle-to-membrane remodeling activity. Involved in retrograde transport of lysosomal enzyme receptor IGF2R. May function as link between endosomal transport vesicles and dynactin. Plays a role in the internalization of EGFR after EGF stimulation. Involved in EGFR endosomal sorting and degradation; the function involves PIP5K1C isoform 3 and is retromer-independent. Together with PIP5K1C isoform 3 facilitates HGS interaction with ubiquitinated EGFR, which initiates EGFR sorting to intraluminal vesicles (ILVs) of the multivesicular body for subsequent lysosomal degradation. Involved in E-cadherin sorting and degradation; inhibits PIP5K1C isoform 3-mediated E-cadherin degradation. Plays a role in macropinocytosis. The polypeptide is Sorting nexin-5 (SNX5) (Homo sapiens (Human)).